A 416-amino-acid polypeptide reads, in one-letter code: Queuine tRNA-ribosyltransferase accessory subunit 2 (416 aa).

The Zn(2+) site is built by Cys323, Cys325, Cys328, and His354.

This sequence belongs to the queuine tRNA-ribosyltransferase family. QTRT2 subfamily. As to quaternary structure, heterodimer of a catalytic subunit and an accessory subunit. Zn(2+) is required as a cofactor.

It localises to the cytoplasm. Its function is as follows. Non-catalytic subunit of the queuine tRNA-ribosyltransferase (TGT) that catalyzes the base-exchange of a guanine (G) residue with queuine (Q) at position 34 (anticodon wobble position) in tRNAs with GU(N) anticodons (tRNA-Asp, -Asn, -His and -Tyr), resulting in the hypermodified nucleoside queuosine (7-(((4,5-cis-dihydroxy-2-cyclopenten-1-yl)amino)methyl)-7-deazaguanosine). This is Queuine tRNA-ribosyltransferase accessory subunit 2 from Drosophila mojavensis (Fruit fly).